Consider the following 192-residue polypeptide: NF-kappa-B inhibitor-interacting Ras-like protein 1 (192 aa).

Position 11–18 (11–18 (GLLSVGKT)) interacts with GTP. The Effector region signature appears at 35–43 (DCETMEDVY). Residues 58–93 (HLYDTRGLQEGVELPKHYFSFADGFVLVYSVNNLES) form an interactions with NFKBIA and NFKBIB region. Residues 61-65 (DTRGL) and 120-123 (NKID) contribute to the GTP site. The interval 168–192 (LSQPQSKSSFPLPGRKNKGNSSSEN) is disordered.

This sequence belongs to the small GTPase superfamily. Ras family. KappaB-Ras subfamily. In terms of assembly, interacts with both NF-kappa-B inhibitor alpha (NFKBIA) and beta (NFKBIB) in vitro. However, it probably only interacts with NFKBIB in vivo. Forms a complex with NFKBIB and NF-kappa-B heterodimer (p50/NFKB1 and p65/RELA). Also interacts with c-Rel (REL).

Its subcellular location is the cytoplasm. Functionally, atypical Ras-like protein that acts as a potent regulator of NF-kappa-B activity by preventing the degradation of NF-kappa-B inhibitor beta (NFKBIB) by most signals, explaining why NFKBIB is more resistant to degradation. May act by blocking phosphorylation of NFKBIB and mediating cytoplasmic retention of p65/RELA NF-kappa-B subunit. It is unclear whether it acts as a GTPase. Both GTP- and GDP-bound forms block phosphorylation of NFKBIB. The chain is NF-kappa-B inhibitor-interacting Ras-like protein 1 (NKIRAS1) from Macaca fascicularis (Crab-eating macaque).